The sequence spans 86 residues: Photosystem I reaction center subunit PsaK 1 (86 aa).

A propeptide spanning residues 1 to 8 is cleaved from the precursor; that stretch reads MLTSTLLA. 2 helical membrane-spanning segments follow: residues 14 to 34 and 60 to 80; these read LEWS…AITF and PALL…VLGL.

This sequence belongs to the PsaG/PsaK family. The cyanobacterial PSI reaction center is composed of one copy each of PsaA,B,C,D,E,F,I,J,K,L,M and X, and forms dimeric and tetrameric complexes.

The protein localises to the cellular thylakoid membrane. The polypeptide is Photosystem I reaction center subunit PsaK 1 (psaK1) (Nostoc sp. (strain PCC 7120 / SAG 25.82 / UTEX 2576)).